Here is a 240-residue protein sequence, read N- to C-terminus: Uridylate kinase (240 aa).

12 to 15 is a binding site for ATP; that stretch reads KLSG. Positions 20 to 25 are involved in allosteric activation by GTP; that stretch reads GSQGFG. G54 is a UMP binding site. Positions 55 and 59 each coordinate ATP. Residues D74 and 135–142 each bind UMP; that span reads TGNPYFST. ATP is bound by residues Y168 and D171.

This sequence belongs to the UMP kinase family. As to quaternary structure, homohexamer.

The protein resides in the cytoplasm. The catalysed reaction is UMP + ATP = UDP + ADP. Its pathway is pyrimidine metabolism; CTP biosynthesis via de novo pathway; UDP from UMP (UMPK route): step 1/1. With respect to regulation, allosterically activated by GTP. Inhibited by UTP. In terms of biological role, catalyzes the reversible phosphorylation of UMP to UDP. The chain is Uridylate kinase from Desulfitobacterium hafniense (strain Y51).